A 154-amino-acid polypeptide reads, in one-letter code: NADPH-dependent 7-cyano-7-deazaguanine reductase (154 aa).

Residue cysteine 52 is the Thioimide intermediate of the active site. Aspartate 59 serves as the catalytic Proton donor. Residues 74–76 and 93–94 contribute to the substrate site; these read VES and HE.

Belongs to the GTP cyclohydrolase I family. QueF type 1 subfamily.

The protein localises to the cytoplasm. It catalyses the reaction 7-aminomethyl-7-carbaguanine + 2 NADP(+) = 7-cyano-7-deazaguanine + 2 NADPH + 3 H(+). It functions in the pathway tRNA modification; tRNA-queuosine biosynthesis. Functionally, catalyzes the NADPH-dependent reduction of 7-cyano-7-deazaguanine (preQ0) to 7-aminomethyl-7-deazaguanine (preQ1). The polypeptide is NADPH-dependent 7-cyano-7-deazaguanine reductase (Ruegeria sp. (strain TM1040) (Silicibacter sp.)).